Here is a 270-residue protein sequence, read N- to C-terminus: Putative envelope-preserving system protein Rv2743c (270 aa).

The next 2 helical transmembrane spans lie at 50–72 (ALRWGLVFTAGCLLWGLVTALLA) and 77–99 (FTSLLVITGTIAVTQAIPATLLL).

In terms of assembly, interacts with PspA and Rv2742c.

The protein localises to the membrane. Its function is as follows. Involved in preservation of envelope integrity and tolerance to surface stress. Reverses the inhibitory effect of PspA on ClgR activity. Facilitates intracellular growth of M.tuberculosis. The polypeptide is Putative envelope-preserving system protein Rv2743c (Mycobacterium tuberculosis (strain ATCC 25618 / H37Rv)).